A 696-amino-acid polypeptide reads, in one-letter code: Polyribonucleotide nucleotidyltransferase (696 aa).

Residues D486 and D492 each coordinate Mg(2+). The KH domain occupies 553–612; sequence PRITQKQIPKDRIGELIGPGGKMIRAIIEQSGSEISVDDSGKVTIASPSEESKEKAIAMI. In terms of domain architecture, S1 motif spans 622–690; it reads GKIYDGVIKR…KMGKIDLSRK (69 aa).

This sequence belongs to the polyribonucleotide nucleotidyltransferase family. It depends on Mg(2+) as a cofactor.

The protein resides in the cytoplasm. The catalysed reaction is RNA(n+1) + phosphate = RNA(n) + a ribonucleoside 5'-diphosphate. Its function is as follows. Involved in mRNA degradation. Catalyzes the phosphorolysis of single-stranded polyribonucleotides processively in the 3'- to 5'-direction. This chain is Polyribonucleotide nucleotidyltransferase, found in Leptospira biflexa serovar Patoc (strain Patoc 1 / ATCC 23582 / Paris).